The following is a 418-amino-acid chain: Probable endo-beta-1,4-glucanase celB (418 aa).

A signal peptide spans 1–18 (MVRTFAVTALALLPLVAA). N-linked (GlcNAc...) asparagine glycans are attached at residues Asn46, Asn118, and Asn136. Residue Glu215 is the Nucleophile of the active site. The Proton donor role is filled by Glu220. N-linked (GlcNAc...) asparagine glycosylation is found at Asn234 and Asn291.

Belongs to the glycosyl hydrolase 7 (cellulase C) family.

It is found in the secreted. It catalyses the reaction Endohydrolysis of (1-&gt;4)-beta-D-glucosidic linkages in cellulose, lichenin and cereal beta-D-glucans.. Has endoglucanase activity on substrates containing beta-1,4 glycosidic bonds, like in carboxymethylcellulose (CMC), hydroxyethylcellulose (HEC) and beta-glucan. Involved in the degradation of complex natural cellulosic substrates. The protein is Probable endo-beta-1,4-glucanase celB (celB) of Aspergillus clavatus (strain ATCC 1007 / CBS 513.65 / DSM 816 / NCTC 3887 / NRRL 1 / QM 1276 / 107).